Consider the following 152-residue polypeptide: CASP-like protein 5B1 (152 aa).

Topologically, residues 1–11 are cytoplasmic; it reads MKKMIGSPGTM. A helical transmembrane segment spans residues 12–32; the sequence is SGLILRLGQCATAAASIGVMV. Topologically, residues 33–42 are extracellular; that stretch reads SSYDFSNYTA. Residue N39 is glycosylated (N-linked (GlcNAc...) asparagine). Residues 43–63 form a helical membrane-spanning segment; that stretch reads FCFLVASMGLQLIWSFGLACL. Residues 64 to 77 are Cytoplasmic-facing; the sequence is DVYAIRRKSDLRSP. The chain crosses the membrane as a helical span at residues 78–98; it reads ILLSLFTVGDWVTALLALAAA. Residues 99–131 are Extracellular-facing; that stretch reads CSSAGVTVLFTKDTEFCRQQPALSCDRFQISVG. Residues 132-152 traverse the membrane as a helical segment; it reads LSFFNWFLAAISSHTMFWILI.

Belongs to the Casparian strip membrane proteins (CASP) family. In terms of assembly, homodimer and heterodimers. In terms of tissue distribution, expressed in leaves, exclusively in hair cells (e.g. differentiated trichomes and immature cells).

It localises to the cell membrane. The polypeptide is CASP-like protein 5B1 (Arabidopsis thaliana (Mouse-ear cress)).